We begin with the raw amino-acid sequence, 378 residues long: Dof zinc finger protein 1 (378 aa).

Over residues 28-38 (GANPNPAATAP) the composition is skewed to low complexity. Residues 28–79 (GANPNPAATAPSSVTGGALRGGGGGGAPPVAGGAGAGSTERRARPQKEKALN) form a disordered region. Gly residues predominate over residues 45–63 (ALRGGGGGGAPPVAGGAGA). Over residues 66–77 (TERRARPQKEKA) the composition is skewed to basic and acidic residues. Residues 78–132 (LNCPRCNSTNTKFCYYNNYSLQQPRYFCKTCRRYWTEGGSLRNVPVGGGSRKNKR) form a Dof-type zinc finger. Residues cysteine 80, cysteine 83, cysteine 105, and cysteine 108 each contribute to the Zn(2+) site. Disordered stretches follow at residues 116-148 (GSLR…ASTA), 203-222 (SLES…NGRG), and 316-378 (LKPT…GTSW). Over residues 133–148 (SSSSAASASPASASTA) the composition is skewed to low complexity. Gly residues-rich tracts occupy residues 323–338 (GTGG…GVDG), 350–361 (AGGGGGGPGGHD), and 369–378 (MIGGGSGTSW).

Its subcellular location is the nucleus. In terms of biological role, transcription factor that may transactivate seed storage protein genes in developing seeds. The protein is Dof zinc finger protein 1 of Oryza sativa subsp. japonica (Rice).